The chain runs to 1773 residues: Mucin-22 (1773 aa).

Positions 1 to 26 are cleaved as a signal peptide; it reads MRRGNISPAFWFLWLLLFGLLGPSSE. Residues 27-1660 lie on the Extracellular side of the membrane; that stretch reads NTTAFTKGSD…VIKPSGYLQP (1634 aa). Disordered stretches follow at residues 61-102, 176-357, 372-405, 434-572, 590-674, 754-1026, 1064-1485, and 1603-1639; these read TGSK…TDSG, TMAS…SETT, MGSE…VGSE, SETI…STAS, TVGS…EGSE, DTTT…ETTM, TTIA…GSET, and MGAS…SMGT. The segment at 153-1514 is 124 X 10 AA approximate repeats; that stretch reads MASSTTSTAG…PTATSLTGSE (1362 aa). A compositionally biased stretch (low complexity) spans 178–243; the sequence is ASTTGSETAT…GSEATTTSTA (66 aa). Over residues 248–258 the composition is skewed to polar residues; that stretch reads ITASSMSSETT. Residues 262–357 are compositionally biased toward low complexity; the sequence is AAGSNTTTAS…TVSTAGSETT (96 aa). 2 stretches are compositionally biased toward low complexity: residues 440–481 and 490–546; these read STAG…AAST and STAG…SEPT. The segment covering 547-572 has biased composition (polar residues); the sequence is MASTMGSETTMASTIGPETTKVSTAS. 2 stretches are compositionally biased toward low complexity: residues 755–1025 and 1064–1465; these read TTTA…SETT and TTIA…GSET. Polar residues-rich tracts occupy residues 1466–1485 and 1615–1639; these read NTAC…GSET and RTTT…SMGT. A helical membrane pass occupies residues 1661–1681; that stretch reads WAIILISLAAVVAAVGLSVGL. The Cytoplasmic segment spans residues 1682 to 1773; that stretch reads SFCLRNLFFP…GGHYGHGGGH (92 aa).

Expressed in lung by serous cells of the submucosal gland (at protein level). Detected in the placenta, lung and testis.

The protein resides in the membrane. This Homo sapiens (Human) protein is Mucin-22 (MUC22).